Reading from the N-terminus, the 584-residue chain is MLAKQTPLTKQMLSELLRASSSKPKQLKKIHAIVLRTGFSEKNSLLTQLLENLVVIGDMCYARQVFDEMHKPRIFLWNTLFKGYVRNQLPFESLLLYKKMRDLGVRPDEFTYPFVVKAISQLGDFSCGFALHAHVVKYGFGCLGIVATELVMMYMKFGELSSAEFLFESMQVKDLVAWNAFLAVCVQTGNSAIALEYFNKMCADAVQFDSFTVVSMLSACGQLGSLEIGEEIYDRARKEEIDCNIIVENARLDMHLKCGNTEAARVLFEEMKQRNVVSWSTMIVGYAMNGDSREALTLFTTMQNEGLRPNYVTFLGVLSACSHAGLVNEGKRYFSLMVQSNDKNLEPRKEHYACMVDLLGRSGLLEEAYEFIKKMPVEPDTGIWGALLGACAVHRDMILGQKVADVLVETAPDIGSYHVLLSNIYAAAGKWDCVDKVRSKMRKLGTKKVAAYSSVEFEGKIHFFNRGDKSHPQSKAIYEKLDEILKKIRKMGYVPDTCSVFHDVEMEEKECSLSHHSEKLAIAFGLIKGRPGHPIRVMKNLRTCDDCHAFSKFVSSLTSTEIIMRDKNRFHHFRNGVCSCKEFW.

The N-terminal 20 residues, 1 to 20 (MLAKQTPLTKQMLSELLRAS), are a transit peptide targeting the mitochondrion. PPR repeat units follow at residues 73–107 (RIFL…GVRP), 108–142 (DEFT…GFGC), 143–173 (LGIV…MQVK), 174–208 (DLVA…AVQF), 209–243 (DSFT…EIDC), 244–274 (NIIV…MKQR), 275–309 (NVVS…GLRP), 310–344 (NYVT…NDKN), and 348–378 (RKEH…MPVE). The segment at 383-458 (IWGALLGACA…VAAYSSVEFE (76 aa)) is type E motif. A type E(+) motif region spans residues 459–489 (GKIHFFNRGDKSHPQSKAIYEKLDEILKKIR). Residues 490–584 (KMGYVPDTCS…NGVCSCKEFW (95 aa)) form a type DYW motif region.

The protein belongs to the PPR family. PCMP-H subfamily.

Its subcellular location is the mitochondrion. In Arabidopsis thaliana (Mouse-ear cress), this protein is Pentatricopeptide repeat-containing protein At2g01510, mitochondrial (PCMP-H37).